A 316-amino-acid chain; its full sequence is Pantothenate kinase (316 aa).

Position 95–102 (95–102 (GSVAVGKS)) interacts with ATP.

This sequence belongs to the prokaryotic pantothenate kinase family.

Its subcellular location is the cytoplasm. It catalyses the reaction (R)-pantothenate + ATP = (R)-4'-phosphopantothenate + ADP + H(+). Its pathway is cofactor biosynthesis; coenzyme A biosynthesis; CoA from (R)-pantothenate: step 1/5. This is Pantothenate kinase (coaA) from Halalkalibacterium halodurans (strain ATCC BAA-125 / DSM 18197 / FERM 7344 / JCM 9153 / C-125) (Bacillus halodurans).